Consider the following 545-residue polypeptide: Chaperonin GroEL (545 aa).

Residues T30–P33, K51, D87–T91, G415, and D496 contribute to the ATP site.

This sequence belongs to the chaperonin (HSP60) family. Forms a cylinder of 14 subunits composed of two heptameric rings stacked back-to-back. Interacts with the co-chaperonin GroES.

It is found in the cytoplasm. The enzyme catalyses ATP + H2O + a folded polypeptide = ADP + phosphate + an unfolded polypeptide.. Functionally, together with its co-chaperonin GroES, plays an essential role in assisting protein folding. The GroEL-GroES system forms a nano-cage that allows encapsulation of the non-native substrate proteins and provides a physical environment optimized to promote and accelerate protein folding. The protein is Chaperonin GroEL of Rhodobacter capsulatus (Rhodopseudomonas capsulata).